A 254-amino-acid chain; its full sequence is Ribosomal RNA small subunit methyltransferase J (254 aa).

S-adenosyl-L-methionine is bound by residues 107–108 (RD), 123–124 (ER), and Asp177.

It belongs to the methyltransferase superfamily. RsmJ family.

It is found in the cytoplasm. It catalyses the reaction guanosine(1516) in 16S rRNA + S-adenosyl-L-methionine = N(2)-methylguanosine(1516) in 16S rRNA + S-adenosyl-L-homocysteine + H(+). Its function is as follows. Specifically methylates the guanosine in position 1516 of 16S rRNA. This chain is Ribosomal RNA small subunit methyltransferase J, found in Histophilus somni (strain 2336) (Haemophilus somnus).